Reading from the N-terminus, the 692-residue chain is Elongation factor G (692 aa).

The 276-residue stretch at 8 to 283 (NRIRNIGIAA…AVIDYLPAPT (276 aa)) folds into the tr-type G domain. GTP-binding positions include 17-24 (AHIDAGKT), 81-85 (DTPGH), and 135-138 (NKMD).

This sequence belongs to the TRAFAC class translation factor GTPase superfamily. Classic translation factor GTPase family. EF-G/EF-2 subfamily.

It localises to the cytoplasm. Functionally, catalyzes the GTP-dependent ribosomal translocation step during translation elongation. During this step, the ribosome changes from the pre-translocational (PRE) to the post-translocational (POST) state as the newly formed A-site-bound peptidyl-tRNA and P-site-bound deacylated tRNA move to the P and E sites, respectively. Catalyzes the coordinated movement of the two tRNA molecules, the mRNA and conformational changes in the ribosome. This is Elongation factor G from Helicobacter pylori (strain G27).